A 437-amino-acid polypeptide reads, in one-letter code: Aromatic peroxidase fscJ (437 aa).

An N-terminal signal peptide occupies residues 1-19; the sequence is MKWLHLLSVVACVADEVYA. Cys-83 contacts heme.

Belongs to the chloroperoxidase family. The cofactor is heme b.

It functions in the pathway secondary metabolite biosynthesis. In terms of biological role, aromatic peroxidase; part of the fragmented gene cluster that mediates the biosynthesis of fusarochromene, a tryptophan-derived metabolite closely related to a group of mycotoxins including fusarochromanone. The role of fscJ within the pathway has not been identified yet. The first step of the pathway is the epimerization of L-tryptophan to D-tryptophan in the presence of the NRPS-like tryptophan epimerase fscC. D-tryptophan is subsequently hydroxylated by the tryptophan 6-hydroxylase fscE to yield 6-hydroxytryptophan. The pyrrole ring undergoes cleavaged by the tryptophan 2,3-dioxygenase fscD and is finally converted to 4-hydroxykyrunenine by the hydrolase fscH. The NRPS-like oxidoreductase fscA reduces the carboxyl group to primary alcohol and the DMATS-type prenyltransferase fscG performs prenylation, followed by the formation of a chromene ring catalyzed by the oxidoreductase fscI, which leads to desacetylfusarochromene. Epoxidation by fscF and rearrangement reactions of chromene double bonds convert compound desacetylfusarochromene to fusarochromanones. Although specific acetyltransferases were not found near the fsc gene cluster, several predicted enzymes containing the N-acetyltransferase superfamily domain are present in the genome of F.equiseti. These predicted enzymes may have the potential to convert desacetylfusarochromene to fusarochromene. This chain is Aromatic peroxidase fscJ, found in Fusarium equiseti (Fusarium scirpi).